Here is a 239-residue protein sequence, read N- to C-terminus: 1-(5-phosphoribosyl)-5-[(5-phosphoribosylamino)methylideneamino] imidazole-4-carboxamide isomerase (239 aa).

Asp-8 serves as the catalytic Proton acceptor. The active-site Proton donor is Asp-129.

It belongs to the HisA/HisF family.

Its subcellular location is the cytoplasm. It carries out the reaction 1-(5-phospho-beta-D-ribosyl)-5-[(5-phospho-beta-D-ribosylamino)methylideneamino]imidazole-4-carboxamide = 5-[(5-phospho-1-deoxy-D-ribulos-1-ylimino)methylamino]-1-(5-phospho-beta-D-ribosyl)imidazole-4-carboxamide. It participates in amino-acid biosynthesis; L-histidine biosynthesis; L-histidine from 5-phospho-alpha-D-ribose 1-diphosphate: step 4/9. The sequence is that of 1-(5-phosphoribosyl)-5-[(5-phosphoribosylamino)methylideneamino] imidazole-4-carboxamide isomerase from Legionella pneumophila (strain Paris).